Consider the following 151-residue polypeptide: Exosporium protein B (151 aa).

It localises to the spore wall. The protein is Exosporium protein B of Clostridium sporogenes (strain ATCC 15579).